The primary structure comprises 215 residues: GTP-binding nuclear protein Ran (215 aa).

The region spanning 6 to 170 (DIPTFKLVLV…LWLVRKLLGD (165 aa)) is the Small GTPase Ran-type domain. GTP contacts are provided by residues 17 to 24 (DGGTGKTT), 35 to 41 (EKKYVAT), G67, 121 to 124 (NFVD), and 149 to 151 (SAK). The segment at 36–44 (KKYVATLGV) is switch-I. The interval 67–83 (GQEKFGGLRDGYYIQGQ) is switch-II. An interaction with RANBP1 region spans residues 210–215 (DDDEDL).

Belongs to the small GTPase superfamily. Ran family. In terms of assembly, monomer. Interacts with RANGAP1, which promotes RAN-mediated GTP hydrolysis. Interacts with KPNB1. Interaction with KPNB1 inhibits RANGAP1-mediated stimulation of GTPase activity. Interacts with RCC1 which promotes the exchange of RAN-bound GDP by GTP. Interaction with KPNB1 inhibits RCC1-mediated exchange of RAN-bound GDP by GTP. Interacts (GTP-bound form) with TNPO1; the interaction is direct. Interacts with KPNB1 and with TNPO1; both inhibit RAN GTPase activity. Interacts (via C-terminus) with RANBP1, which alleviates the inhibition of RAN GTPase activity. Interacts with RANGRF, which promotes the release of bound guanine nucleotide. RANGRF and RCC1 compete for an overlapping binding site on RAN. Identified in a complex with KPNA2 and CSE1L; interaction with RANBP1 mediates dissociation of RAN from this complex. Interaction with both RANBP1 and KPNA2 promotes dissociation of the complex between RAN and KPNB1. Identified in a complex composed of RAN, RANGAP1 and RANBP1. Identified in a complex that contains TNPO1, RAN and RANBP1. Identified in a nuclear export complex with XPO1. Interaction with RANBP1 or RANBP2 induces a conformation change in the complex formed by XPO1 and RAN that triggers the release of the nuclear export signal of cargo proteins. Component of a nuclear export receptor complex composed of KPNB1, RAN, SNUPN and XPO1. It depends on Mg(2+) as a cofactor.

The protein localises to the nucleus. Its subcellular location is the nucleus envelope. It is found in the cytoplasm. The protein resides in the cytosol. In terms of biological role, GTPase involved in nucleocytoplasmic transport, participating both to the import and the export from the nucleus of proteins and RNAs. Switches between a cytoplasmic GDP- and a nuclear GTP-bound state by nucleotide exchange and GTP hydrolysis. Nuclear import receptors such as importin beta bind their substrates only in the absence of GTP-bound RAN and release them upon direct interaction with GTP-bound RAN, while export receptors behave in the opposite way. Thereby, RAN controls cargo loading and release by transport receptors in the proper compartment and ensures the directionality of the transport. Interaction with RANBP1 induces a conformation change in the complex formed by XPO1 and RAN that triggers the release of the nuclear export signal of cargo proteins. RAN (GTP-bound form) triggers microtubule assembly at mitotic chromosomes and is required for normal mitotic spindle assembly and chromosome segregation. Required for normal progress through mitosis. The polypeptide is GTP-binding nuclear protein Ran (ran-1) (Onchocerca volvulus).